Here is a 429-residue protein sequence, read N- to C-terminus: Enolase (429 aa).

(2R)-2-phosphoglycerate is bound at residue Gln-167. Catalysis depends on Glu-209, which acts as the Proton donor. 3 residues coordinate Mg(2+): Asp-246, Glu-289, and Asp-316. Residues Lys-341, Arg-370, Ser-371, and Lys-392 each coordinate (2R)-2-phosphoglycerate. Lys-341 functions as the Proton acceptor in the catalytic mechanism.

The protein belongs to the enolase family. In terms of assembly, component of the RNA degradosome, a multiprotein complex involved in RNA processing and mRNA degradation. Requires Mg(2+) as cofactor.

Its subcellular location is the cytoplasm. It is found in the secreted. The protein localises to the cell surface. The enzyme catalyses (2R)-2-phosphoglycerate = phosphoenolpyruvate + H2O. Its pathway is carbohydrate degradation; glycolysis; pyruvate from D-glyceraldehyde 3-phosphate: step 4/5. In terms of biological role, catalyzes the reversible conversion of 2-phosphoglycerate (2-PG) into phosphoenolpyruvate (PEP). It is essential for the degradation of carbohydrates via glycolysis. This chain is Enolase, found in Ectopseudomonas mendocina (strain ymp) (Pseudomonas mendocina).